A 151-amino-acid chain; its full sequence is Deoxyuridine 5'-triphosphate nucleotidohydrolase (151 aa).

Substrate contacts are provided by residues 69 to 71, N82, and 86 to 88; these read RSG and TID.

The protein belongs to the dUTPase family. It depends on Mg(2+) as a cofactor.

It carries out the reaction dUTP + H2O = dUMP + diphosphate + H(+). The protein operates within pyrimidine metabolism; dUMP biosynthesis; dUMP from dCTP (dUTP route): step 2/2. Functionally, this enzyme is involved in nucleotide metabolism: it produces dUMP, the immediate precursor of thymidine nucleotides and it decreases the intracellular concentration of dUTP so that uracil cannot be incorporated into DNA. This chain is Deoxyuridine 5'-triphosphate nucleotidohydrolase, found in Rhodospirillum centenum (strain ATCC 51521 / SW).